Reading from the N-terminus, the 332-residue chain is UPF0194 membrane protein YbhG (332 aa).

The N-terminal stretch at 1-16 (MMKKPVVIGLAVVVLA) is a signal peptide. Positions 108 to 209 (EEIAQAAAAV…LNLQDSTLIA (102 aa)) form a coiled coil.

Belongs to the UPF0194 family.

It is found in the periplasm. This chain is UPF0194 membrane protein YbhG, found in Escherichia coli O45:K1 (strain S88 / ExPEC).